A 512-amino-acid chain; its full sequence is Cytochrome P450 72A15 (512 aa).

Residues 2–22 (EISVASVTISVVLAVVSWWIW) form a helical membrane-spanning segment. A heme-binding site is contributed by cysteine 460.

Belongs to the cytochrome P450 family. It depends on heme as a cofactor.

The protein resides in the membrane. This is Cytochrome P450 72A15 (CYP72A15) from Arabidopsis thaliana (Mouse-ear cress).